The following is a 485-amino-acid chain: Adenosylhomocysteinase (485 aa).

Substrate-binding residues include Thr-64, Asp-139, and Glu-205. 206–208 lines the NAD(+) pocket; it reads TTT. Residues Lys-235 and Asp-239 each coordinate substrate. NAD(+) is bound by residues Asn-240, 269–274, Glu-292, Asn-327, 348–350, and Asn-397; these read GYGDVG and IGH.

This sequence belongs to the adenosylhomocysteinase family. The cofactor is NAD(+).

The enzyme catalyses S-adenosyl-L-homocysteine + H2O = L-homocysteine + adenosine. It participates in amino-acid biosynthesis; L-homocysteine biosynthesis; L-homocysteine from S-adenosyl-L-homocysteine: step 1/1. In terms of biological role, adenosylhomocysteine is a competitive inhibitor of S-adenosyl-L-methionine-dependent methyl transferase reactions; therefore adenosylhomocysteinase may play a key role in the control of methylations via regulation of the intracellular concentration of adenosylhomocysteine. This is Adenosylhomocysteinase (SAHH) from Nicotiana sylvestris (Wood tobacco).